Consider the following 339-residue polypeptide: Uroporphyrinogen decarboxylase (339 aa).

Substrate contacts are provided by residues 21 to 25, D71, Y147, S202, and H315; that span reads RQAGR.

It belongs to the uroporphyrinogen decarboxylase family. As to quaternary structure, homodimer.

Its subcellular location is the cytoplasm. It catalyses the reaction uroporphyrinogen III + 4 H(+) = coproporphyrinogen III + 4 CO2. The protein operates within porphyrin-containing compound metabolism; protoporphyrin-IX biosynthesis; coproporphyrinogen-III from 5-aminolevulinate: step 4/4. Its function is as follows. Catalyzes the decarboxylation of four acetate groups of uroporphyrinogen-III to yield coproporphyrinogen-III. The polypeptide is Uroporphyrinogen decarboxylase (Helicobacter pylori (strain Shi470)).